The following is a 442-amino-acid chain: MDDRKFSVLIAGGGSTYTPGIVLTLLDHIQKFPLRKLKFYDIDGERQQRVADACEILVKERAPEVEFLATTDPEEAFTDVDFVMAQIRVGKYAMRSLDEKIPLKHGVVGQETTGPGGIAYGLRSIPGVIGLVDYMEKYSPNAWMLNYSNPAAIVAEATRRLRPHSRIINICDMPIGIMDRMAQIVGLKDRNDLVFRYYGLNHFGWWTDVRDKTGKDLMPALKQYVAKNGYWLGDKDKDTEASWVSTFKKAADVYALDPSTLPNTYLKYYLYPKYVVEHSDPNYTRTDEVEAYREKHVFDECDRIIAAGTAADTHFKSDDHATYIVDLCTAIAYDTKQRMLAIVPNDGAIENIDPEAMVEVPCLFGANGAERLAMGKAATFQKGLITEQNCVEKLTVDAFEQQSYTKLWEAMSLCKIVPDASVAKEILDEMVVANKDYWPELK.

6-72 (FSVLIAGGGS…PEVEFLATTD (67 aa)) is an NAD(+) binding site. Residues Arg-95 and Asn-149 each contribute to the substrate site. A Mn(2+)-binding site is contributed by Cys-171. The active-site Proton donor is Asp-172. His-202 is a Mn(2+) binding site. The active-site Proton acceptor is the Tyr-265. Arg-285 lines the substrate pocket.

The protein belongs to the glycosyl hydrolase 4 family. As to quaternary structure, homodimer. May also form homotetramer. The cofactor is Mn(2+). Co(2+) serves as cofactor. Ni(2+) is required as a cofactor. Requires Fe(2+) as cofactor. It depends on Mg(2+) as a cofactor. The cofactor is NAD(+).

It carries out the reaction alpha-maltose 6'-phosphate + H2O = D-glucose 6-phosphate + D-glucose. With respect to regulation, is inhibited by EDTA in vitro. Is probably involved in the catabolism of alpha-glycosides accumulated via a phosphoenolpyruvate-dependent phosphotransferase system (PEP-PTS). Hydrolyzes a wide variety of 6-phospho-alpha-D-glucosides including the five isomeric derivatives of sucrose, i.e. trehalulose-6'-phosphate, turanose-6'-phosphate, maltulose-6'-phosphate, leucrose-6'-phosphate, and palatinose-6'-phosphate, but is not active on sucrose-6-phosphate. Can also hydrolyze maltose-6'-phosphate and methyl-alpha-glucose-6-phosphate, and poorly, trehalose-6-phosphate. Fails to hydrolyze beta-O-linked phosphorylated disaccharides such as cellobiose-6'-phosphate and gentiobiose-6'-phosphate. Does not seem to be involved in maltose catabolism. The polypeptide is 6-phospho-alpha-glucosidase 1 (simA) (Lacticaseibacillus paracasei (strain ATCC 334 / BCRC 17002 / CCUG 31169 / CIP 107868 / KCTC 3260 / NRRL B-441) (Lactobacillus paracasei)).